The following is a 76-amino-acid chain: DNA gyrase inhibitor YacG (76 aa).

Zn(2+) contacts are provided by C7, C10, C26, and C30.

The protein belongs to the DNA gyrase inhibitor YacG family. Interacts with GyrB. Zn(2+) is required as a cofactor.

Inhibits all the catalytic activities of DNA gyrase by preventing its interaction with DNA. Acts by binding directly to the C-terminal domain of GyrB, which probably disrupts DNA binding by the gyrase. This Pseudoalteromonas translucida (strain TAC 125) protein is DNA gyrase inhibitor YacG.